We begin with the raw amino-acid sequence, 122 residues long: Small ribosomal subunit protein uS13 (122 aa).

Residues 94–122 (SLPVRGQRTKTNARTRKVHVSRSKNSRGK) are disordered.

Belongs to the universal ribosomal protein uS13 family. Part of the 30S ribosomal subunit. Forms a loose heterodimer with protein S19. Forms two bridges to the 50S subunit in the 70S ribosome.

Functionally, located at the top of the head of the 30S subunit, it contacts several helices of the 16S rRNA. In the 70S ribosome it contacts the 23S rRNA (bridge B1a) and protein L5 of the 50S subunit (bridge B1b), connecting the 2 subunits; these bridges are implicated in subunit movement. Contacts the tRNAs in the A and P-sites. The sequence is that of Small ribosomal subunit protein uS13 from Haemophilus influenzae (strain ATCC 51907 / DSM 11121 / KW20 / Rd).